The sequence spans 128 residues: uncharacterized protein (128 aa).

This is an uncharacterized protein from Gallus gallus (Chicken).